Reading from the N-terminus, the 217-residue chain is MAAGYRAEDDYDYLFKVVLIGDSGVGKSNLLSRFTRNEFSLESKSTIGVEFATRSLQVDGKVVKAQIWDTAGQERYRAITSAYYRGAVGALLVYDVTRHSTFENVERWLKELRDHTDPNIVVMLVGNKSDLRHLVAVQTDEGKAFAERESLYFMETSALESTNVENAFAEVLTQIYRIVSKRSVEAGDDAGSGPGKGEKINIKDDVSAVKKGGCCSG.

GTP is bound by residues 21–28 (GDSGVGKS), 69–73 (DTAGQ), and 127–130 (NKSD). 2 S-geranylgeranyl cysteine lipidation sites follow: cysteine 214 and cysteine 215.

Belongs to the small GTPase superfamily. Rab family.

The protein localises to the cell membrane. Functionally, possesses GTPase activity. The sequence is that of Ras-related protein RIC2 (RIC2) from Oryza sativa subsp. japonica (Rice).